An 84-amino-acid polypeptide reads, in one-letter code: Cell division topological specificity factor (84 aa).

This sequence belongs to the MinE family.

Its function is as follows. Prevents the cell division inhibition by proteins MinC and MinD at internal division sites while permitting inhibition at polar sites. This ensures cell division at the proper site by restricting the formation of a division septum at the midpoint of the long axis of the cell. The polypeptide is Cell division topological specificity factor (Pseudomonas putida (strain ATCC 700007 / DSM 6899 / JCM 31910 / BCRC 17059 / LMG 24140 / F1)).